The primary structure comprises 1247 residues: E3 ubiquitin-protein ligase hecw-1 (1247 aa).

A WW 1 domain is found at 602-635 (TPPESHWKTYLDAKKRKFYVNHVTKETRWTKPDT). A disordered region spans residues 633 to 659 (PDTLNNNHIEPETPVHKRLSDRSASPR). Residues 641-653 (IEPETPVHKRLSD) show a composition bias toward basic and acidic residues. A WW 2 domain is found at 745 to 777 (QPLPSGWECITMNNRTVFLNHANKETSFYDPRI). Positions 914 to 1247 (DPFVLKKSRL…IVNGMSYSIE (334 aa)) constitute an HECT domain. Catalysis depends on Cys1215, which acts as the Glycyl thioester intermediate.

In terms of tissue distribution, expressed in the nervous system throughout the body. In the anterior ganglion, expression is limited to the two lateral outer labial neurons OLLL and OLLR.

It localises to the cytoplasm. The catalysed reaction is S-ubiquitinyl-[E2 ubiquitin-conjugating enzyme]-L-cysteine + [acceptor protein]-L-lysine = [E2 ubiquitin-conjugating enzyme]-L-cysteine + N(6)-ubiquitinyl-[acceptor protein]-L-lysine.. It functions in the pathway protein modification; protein ubiquitination. Its function is as follows. E3 ubiquitin-protein ligase. Functions in the OLL neurons in the anterior ganglion to inhibit avoidance to microbial pathogens such as P.aeruginosa although worms do display avoidance behavior, vacating a P.aeruginosa lawn within 24 hours. Likely to act by inhibiting the neuropeptide receptor npr-1. The protein is E3 ubiquitin-protein ligase hecw-1 of Caenorhabditis elegans.